Reading from the N-terminus, the 1173-residue chain is Fas-binding factor 1 (1173 aa).

A disordered region spans residues 17-168; sequence MALRTKKGLK…PSSSKTGLQY (152 aa). Residues 46–56 show a composition bias toward basic and acidic residues; it reads KPAEPASHAKD. Positions 80–93 are enriched in low complexity; the sequence is AGADAEASSVSDAD. Ser172 carries the post-translational modification Phosphoserine. 2 disordered regions span residues 180-225 and 241-566; these read LAGL…GDTP and TTLG…SSRE. The segment covering 206–216 has biased composition (low complexity); sequence SPGAAAGQGPS. 2 stretches are compositionally biased toward basic and acidic residues: residues 247 to 258 and 287 to 299; these read DSPKAERKKTGD and TGERREFQLDKKY. Polar residues-rich tracts occupy residues 331–345, 396–411, 468–477, and 533–544; these read VASSEGRQSRRQSVS, SPVQKAQQEDSPMTPS, VISQKKSQNL, and TGSSMSWSQATT. Coiled coils occupy residues 617-742, 808-917, and 975-1057; these read TAQL…QQAS, QQRE…MNKC, and CELR…VQRQ. Residue Lys1002 forms a Glycyl lysine isopeptide (Lys-Gly) (interchain with G-Cter in SUMO2) linkage. Positions 1091-1124 are disordered; it reads ASLPGLPPRVQGPAASSRDAVQAPASSSPQCSQP. Positions 1110–1124 are enriched in low complexity; sequence AVQAPASSSPQCSQP.

In terms of assembly, interacts with PARD3. May interact with FAS cytoplasmic domain. Interacts with TRAPPC14. As to expression, broadly expressed.

It localises to the cytoplasm. The protein localises to the cytoskeleton. It is found in the microtubule organizing center. The protein resides in the centrosome. Its subcellular location is the centriole. It localises to the spindle pole. The protein localises to the cell junction. Its function is as follows. Keratin-binding protein required for epithelial cell polarization. Involved in apical junction complex (AJC) assembly via its interaction with PARD3. Required for ciliogenesis. In Mus musculus (Mouse), this protein is Fas-binding factor 1 (Fbf1).